We begin with the raw amino-acid sequence, 492 residues long: Bifunctional purine biosynthesis protein PurH (492 aa).

Residues 1 to 144 (MKKAILSVSN…KNYKHVTTIV (144 aa)) form the MGS-like domain.

Belongs to the PurH family.

It catalyses the reaction (6R)-10-formyltetrahydrofolate + 5-amino-1-(5-phospho-beta-D-ribosyl)imidazole-4-carboxamide = 5-formamido-1-(5-phospho-D-ribosyl)imidazole-4-carboxamide + (6S)-5,6,7,8-tetrahydrofolate. The catalysed reaction is IMP + H2O = 5-formamido-1-(5-phospho-D-ribosyl)imidazole-4-carboxamide. Its pathway is purine metabolism; IMP biosynthesis via de novo pathway; 5-formamido-1-(5-phospho-D-ribosyl)imidazole-4-carboxamide from 5-amino-1-(5-phospho-D-ribosyl)imidazole-4-carboxamide (10-formyl THF route): step 1/1. The protein operates within purine metabolism; IMP biosynthesis via de novo pathway; IMP from 5-formamido-1-(5-phospho-D-ribosyl)imidazole-4-carboxamide: step 1/1. This is Bifunctional purine biosynthesis protein PurH from Staphylococcus aureus (strain MRSA252).